The sequence spans 152 residues: CASP-like protein 5C1 (152 aa).

Topologically, residues M1 to S12 are cytoplasmic. Residues S13 to F33 form a helical membrane-spanning segment. Over N34–T44 the chain is Extracellular. A helical transmembrane segment spans residues F45–M65. The Cytoplasmic segment spans residues E66–T80. Residues V81–C101 form a helical membrane-spanning segment. Topologically, residues S102 to T126 are extracellular. Residues M127–P147 traverse the membrane as a helical segment. The Cytoplasmic segment spans residues S148–H152.

Belongs to the Casparian strip membrane proteins (CASP) family. As to quaternary structure, homodimer and heterodimers.

Its subcellular location is the cell membrane. The sequence is that of CASP-like protein 5C1 from Arabidopsis thaliana (Mouse-ear cress).